Consider the following 163-residue polypeptide: MAKRRAAEPLTFRVPWKRLLLSDFPEEPPLWVPPSGTARPLKRQGDAGIMAEPASAPRKRRGGGDDRQELQGCSREPGEPPPGEQEEPRAAGGGDRVESAGSPQVADGVHSQQPEEFWQYNTFQYWRNPLPPLDLAALEDVSANSLTETLEDKNEGVEIDMES.

A disordered region spans residues 23-113 (DFPEEPPLWV…QVADGVHSQQ (91 aa)). Residue serine 102 is modified to Phosphoserine.

This is an uncharacterized protein from Mus musculus (Mouse).